The primary structure comprises 131 residues: D-ribose pyranase (131 aa).

Catalysis depends on histidine 20, which acts as the Proton donor. Substrate-binding positions include aspartate 28, histidine 98, and 120–122 (YAN).

This sequence belongs to the RbsD / FucU family. RbsD subfamily. In terms of assembly, homodecamer.

Its subcellular location is the cytoplasm. It carries out the reaction beta-D-ribopyranose = beta-D-ribofuranose. Its pathway is carbohydrate metabolism; D-ribose degradation; D-ribose 5-phosphate from beta-D-ribopyranose: step 1/2. Functionally, catalyzes the interconversion of beta-pyran and beta-furan forms of D-ribose. The chain is D-ribose pyranase from Bacillus cereus (strain G9842).